The chain runs to 1220 residues: ATP-dependent helicase/deoxyribonuclease subunit B (1220 aa).

A UvrD-like helicase ATP-binding domain is found at 1 to 281; it reads MSMRFIVGRA…VFLTETHRFE (281 aa). 8 to 15 serves as a coordination point for ATP; that stretch reads GRAGTGKS. Positions 283-590 constitute a UvrD-like helicase C-terminal domain; the sequence is AGLKHLERFY…LVGSLDRSRN (308 aa). Cysteine 788 contributes to the [4Fe-4S] cluster binding site. Residues 989–1008 are disordered; it reads LAEGSKGSEGSEGSEDSEDS. 3 residues coordinate [4Fe-4S] cluster: cysteine 1128, cysteine 1131, and cysteine 1137. Polar residues predominate over residues 1162–1171; the sequence is RVQSQDSEQY. The segment at 1162-1220 is disordered; the sequence is RVQSQDSEQYPEQHPPTSVPGETSRRALQKDGGNSPRGQELIWLGEDEAGAGKEDDGHE. Basic and acidic residues predominate over residues 1211-1220; sequence GAGKEDDGHE.

The protein belongs to the helicase family. AddB/RexB type 1 subfamily. In terms of assembly, heterodimer of AddA and AddB. Requires Mg(2+) as cofactor. [4Fe-4S] cluster serves as cofactor.

The heterodimer acts as both an ATP-dependent DNA helicase and an ATP-dependent, dual-direction single-stranded exonuclease. Recognizes the chi site generating a DNA molecule suitable for the initiation of homologous recombination. The AddB subunit has 5' -&gt; 3' nuclease activity but not helicase activity. This is ATP-dependent helicase/deoxyribonuclease subunit B from Desulfitobacterium hafniense (strain Y51).